A 239-amino-acid chain; its full sequence is Cyclo(L-leucyl-L-phenylalanyl) synthase (239 aa).

Ser-37 serves as the catalytic Nucleophile. Substrate contacts are provided by residues Asn-40, 178–182 (YVLAE), and Tyr-202.

It belongs to the CDPS family. In terms of assembly, monomer.

It catalyses the reaction L-phenylalanyl-tRNA(Phe) + L-leucyl-tRNA(Leu) = cyclo(L-phenylalanyl-L-leucyl) + tRNA(Phe) + tRNA(Leu) + H(+). Its function is as follows. Involved in the biosynthesis of albonoursin (cyclo[(alpha,beta-dehydro-Phe)-(alpha,beta-dehydro-Leu)]), an antibacterial peptide. It uses activated amino acids in the form of aminoacyl-tRNAs (aa-tRNAs) as substrates to catalyze the ATP-independent formation of cyclodipeptides which are intermediates in diketopiperazine (DKP) biosynthetic pathways. Catalyzes the formation of cyclo(L-Phe-L-Leu) (cFL) as major products from L-L-phenylalanyl-tRNA(Phe) and L-leucyl-tRNA(Leu). AlbC can also incorporate various nonpolar residues, such as L-phenylalanine, L-leucine, L-tyrosine and L-methionine, and to a much lesser extent L-alanine and L-valine, into cyclodipeptides. Indeed, ten possible cyclodipeptides composed of L-phenylalanine, L-leucine, L-tyrosine and L-methionine are all synthesized to detectable amounts by AlbC. In Streptomyces noursei (Streptomyces albulus), this protein is Cyclo(L-leucyl-L-phenylalanyl) synthase (albC).